We begin with the raw amino-acid sequence, 460 residues long: Angiopoietin-related protein 3 (460 aa).

Positions 1-16 (MFTIKLLLFIVPLVIS) are cleaved as a signal peptide. The interval 17–165 (SRIDQDNSSF…PEHPEVTSLK (149 aa)) is sufficient to inhibit LPL lipase activity. A sufficient to inhibit LIPG/EL phospholipase activity region spans residues 17-207 (SRIDQDNSSF…EIENQLRRTS (191 aa)). The segment at 32–56 (EPKSRFAMLDDVKILANGLLQLGHG) is required for inhibition of LPL lipase activity. Positions 85–210 (LSLQTSEIKE…NQLRRTSIQE (126 aa)) form a coiled coil. An N-linked (GlcNAc...) asparagine glycan is attached at asparagine 115. Residue threonine 226 is glycosylated (O-linked (GalNAc) threonine). The Fibrinogen C-terminal domain occupies 237 to 455 (VKHDGIPAEC…STKMLIHPTD (219 aa)). A disulfide bridge connects residues cysteine 246 and cysteine 274. Residues asparagine 296 and asparagine 357 are each glycosylated (N-linked (GlcNAc...) asparagine). An intrachain disulfide couples cysteine 394 to cysteine 408.

As to quaternary structure, interacts with ANGPTL8. Interacts with ITGB3. In terms of processing, O-glycosylated at Thr-226 by GALNT2; blocks processing and activation by proprotein convertases. In part proteolytically cleaved by proprotein convertases; proposed to be involved in activation. As to expression, expressed principally in liver. Weakly expressed in kidney. Binds to adipocytes. Increased expression and colocalization with activated ITGB3 in glomeruli of patients with nephrotic syndrome showing effaced podocyte foot processes (at protein level).

It is found in the secreted. The protein resides in the cell projection. It localises to the lamellipodium. Functionally, acts in part as a hepatokine that is involved in regulation of lipid and glucose metabolism. Proposed to play a role in the trafficking of energy substrates to either storage or oxidative tissues in response to food intake. Has a stimulatory effect on plasma triglycerides (TG), which is achieved by suppressing plasma TG clearance via inhibition of LPL activity. The inhibition of LPL activity appears to be an indirect mechanism involving recruitment of proprotein convertases PCSK6 and FURIN to LPL leading to cleavage and dissociation of LPL from the cell surface; the function does not require ANGPTL3 proteolytic cleavage but seems to be mediated by the N-terminal domain, and is not inhibited by GPIHBP1. Can inhibit endothelial lipase, causing increased plasma levels of high density lipoprotein (HDL) cholesterol and phospholipids. Can bind to adipocytes to activate lipolysis, releasing free fatty acids and glycerol. Suppresses LPL specifically in oxidative tissues which is required to route very low density lipoprotein (VLDL)-TG to white adipose tissue (WAT) for storage in response to food; the function may involve cooperation with circulating, liver-derived ANGPTL8 and ANGPTL4 expression in WAT. Contributes to lower plasma levels of low density lipoprotein (LDL)-cholesterol by a mechanism that is independent of the canonical pathway implicating APOE and LDLR. May stimulate hypothalamic LPL activity. In terms of biological role, in vitro inhibits LPL activity; not effective on GPIHBP1-stabilized LPL. Its function is as follows. Involved in angiogenesis. Binds to endothelial cells via integrin alpha-V/beta-3 (ITGAV:ITGB3), activates FAK, MAPK and Akt signaling pathways and induces cell adhesion and cell migration. Secreted from podocytes, may modulate properties of glomerular endothelial cells involving integrin alpha-V/beta-3 and Akt signaling. May increase the motility of podocytes. May induce actin filament rearrangements in podocytes implicating integrin alpha-V/beta-3 and Rac1 activation. Binds to hematopoietic stem cells (HSC) and is involved in the regulation of HSC activity probably implicating down-regulation of IKZF1/IKAROS. The polypeptide is Angiopoietin-related protein 3 (ANGPTL3) (Homo sapiens (Human)).